A 189-amino-acid polypeptide reads, in one-letter code: Glycerol-3-phosphate acyltransferase (189 aa).

A run of 5 helical transmembrane segments spans residues 1–21, 50–70, 77–97, 111–131, and 151–171; these read MFWL…AIVL, KLAI…VLLA, LHAQ…PLYF, MLMG…LLTF, and LLAW…VMIV.

The protein belongs to the PlsY family. As to quaternary structure, probably interacts with PlsX.

It is found in the cell inner membrane. The catalysed reaction is an acyl phosphate + sn-glycerol 3-phosphate = a 1-acyl-sn-glycero-3-phosphate + phosphate. Its pathway is lipid metabolism; phospholipid metabolism. In terms of biological role, catalyzes the transfer of an acyl group from acyl-phosphate (acyl-PO(4)) to glycerol-3-phosphate (G3P) to form lysophosphatidic acid (LPA). This enzyme utilizes acyl-phosphate as fatty acyl donor, but not acyl-CoA or acyl-ACP. The protein is Glycerol-3-phosphate acyltransferase of Pseudomonas putida (strain ATCC 700007 / DSM 6899 / JCM 31910 / BCRC 17059 / LMG 24140 / F1).